Reading from the N-terminus, the 114-residue chain is Ribosome-binding factor A (114 aa).

It belongs to the RbfA family. Monomer. Binds 30S ribosomal subunits, but not 50S ribosomal subunits or 70S ribosomes.

It is found in the cytoplasm. Functionally, one of several proteins that assist in the late maturation steps of the functional core of the 30S ribosomal subunit. Associates with free 30S ribosomal subunits (but not with 30S subunits that are part of 70S ribosomes or polysomes). Required for efficient processing of 16S rRNA. May interact with the 5'-terminal helix region of 16S rRNA. In Listeria innocua serovar 6a (strain ATCC BAA-680 / CLIP 11262), this protein is Ribosome-binding factor A.